A 622-amino-acid polypeptide reads, in one-letter code: Threonine--tRNA ligase (622 aa).

Residues 1-141 are editing domain; it reads MKTLLIHSDY…SRKITTERKE (141 aa). The segment at 199 to 498 is catalytic; the sequence is PHVKYIKEKE…TLENKPPALP (300 aa). Zn(2+) is bound by residues C291, H343, and H467.

This sequence belongs to the class-II aminoacyl-tRNA synthetase family. Homodimer. It depends on Zn(2+) as a cofactor.

The protein localises to the cytoplasm. The catalysed reaction is tRNA(Thr) + L-threonine + ATP = L-threonyl-tRNA(Thr) + AMP + diphosphate + H(+). Functionally, catalyzes the attachment of threonine to tRNA(Thr) in a two-step reaction: L-threonine is first activated by ATP to form Thr-AMP and then transferred to the acceptor end of tRNA(Thr). Also edits incorrectly charged L-seryl-tRNA(Thr). In Methanococcus maripaludis (strain C5 / ATCC BAA-1333), this protein is Threonine--tRNA ligase.